Here is a 214-residue protein sequence, read N- to C-terminus: Redox-sensing transcriptional repressor Rex (214 aa).

The H-T-H motif DNA-binding region spans 16 to 55 (IYFRYLNVLKDANKQRVSSTELSEAVQVDSATIRRDFSYF). Position 90–95 (90–95 (GVGSLG)) interacts with NAD(+).

This sequence belongs to the transcriptional regulatory Rex family. In terms of assembly, homodimer.

The protein resides in the cytoplasm. In terms of biological role, modulates transcription in response to changes in cellular NADH/NAD(+) redox state. This chain is Redox-sensing transcriptional repressor Rex, found in Limosilactobacillus reuteri (strain DSM 20016) (Lactobacillus reuteri).